Reading from the N-terminus, the 276-residue chain is Expansin-A25 (276 aa).

The first 27 residues, 1 to 27 (MKLLEQMVYVECFMIIMATLLVSMSYG), serve as a signal peptide directing secretion. In terms of domain architecture, Expansin-like EG45 spans 73–183 (QGACGYGDLF…RRISCARTGG (111 aa)). Residues 193-272 (YFLMILPYNV…NWGFGQTFDG (80 aa)) enclose the Expansin-like CBD domain.

Belongs to the expansin family. Expansin A subfamily.

It is found in the secreted. The protein localises to the cell wall. It localises to the membrane. Its function is as follows. Causes loosening and extension of plant cell walls by disrupting non-covalent bonding between cellulose microfibrils and matrix glucans. No enzymatic activity has been found. The protein is Expansin-A25 (EXPA25) of Arabidopsis thaliana (Mouse-ear cress).